Reading from the N-terminus, the 677-residue chain is Methionine--tRNA ligase (677 aa).

Residues 15–25 (PYANGSIHLGH) carry the 'HIGH' region motif. Zn(2+) contacts are provided by Cys-146, Cys-149, Cys-159, and Cys-162. Residues 333–337 (KMSKS) carry the 'KMSKS' region motif. Lys-336 is an ATP binding site. The 103-residue stretch at 575 to 677 (DFAKIDLRVA…DGAKPGQQVK (103 aa)) folds into the tRNA-binding domain.

Belongs to the class-I aminoacyl-tRNA synthetase family. MetG type 1 subfamily. As to quaternary structure, homodimer. Requires Zn(2+) as cofactor.

Its subcellular location is the cytoplasm. The catalysed reaction is tRNA(Met) + L-methionine + ATP = L-methionyl-tRNA(Met) + AMP + diphosphate. Is required not only for elongation of protein synthesis but also for the initiation of all mRNA translation through initiator tRNA(fMet) aminoacylation. The polypeptide is Methionine--tRNA ligase (Salmonella typhimurium (strain LT2 / SGSC1412 / ATCC 700720)).